The following is a 260-amino-acid chain: Thiazole synthase (260 aa).

The Schiff-base intermediate with DXP role is filled by K96. Residues G157, 184-185 (AG), and 206-207 (NT) contribute to the 1-deoxy-D-xylulose 5-phosphate site.

This sequence belongs to the ThiG family. Homotetramer. Forms heterodimers with either ThiH or ThiS.

Its subcellular location is the cytoplasm. The enzyme catalyses [ThiS sulfur-carrier protein]-C-terminal-Gly-aminoethanethioate + 2-iminoacetate + 1-deoxy-D-xylulose 5-phosphate = [ThiS sulfur-carrier protein]-C-terminal Gly-Gly + 2-[(2R,5Z)-2-carboxy-4-methylthiazol-5(2H)-ylidene]ethyl phosphate + 2 H2O + H(+). It participates in cofactor biosynthesis; thiamine diphosphate biosynthesis. Functionally, catalyzes the rearrangement of 1-deoxy-D-xylulose 5-phosphate (DXP) to produce the thiazole phosphate moiety of thiamine. Sulfur is provided by the thiocarboxylate moiety of the carrier protein ThiS. In vitro, sulfur can be provided by H(2)S. The chain is Thiazole synthase from Bradyrhizobium diazoefficiens (strain JCM 10833 / BCRC 13528 / IAM 13628 / NBRC 14792 / USDA 110).